A 273-amino-acid polypeptide reads, in one-letter code: Trypsin-6 (273 aa).

Positions 1–22 (MLSKFTAILLAVHIALFACALT) are cleaved as a signal peptide. Positions 23–46 (QAEKRHKLTRPAFHPNAPYLAGKR) are cleaved as a propeptide — activation peptide. The 226-residue stretch at 47–272 (IVGGFVIDIS…VRDWIRETSG (226 aa)) folds into the Peptidase S1 domain. An intrachain disulfide couples Cys72 to Cys88. Residues His87 and Asp132 each act as charge relay system in the active site. Disulfide bonds link Cys197–Cys213 and Cys224–Cys248. Residue Ser228 is the Charge relay system of the active site.

The protein belongs to the peptidase S1 family. In terms of tissue distribution, expressed in the midgut. Expression levels drop a few hours after blood feeding and pick up again 28 hours later.

The protein localises to the secreted. It catalyses the reaction Preferential cleavage: Arg-|-Xaa, Lys-|-Xaa.. Functionally, constitutive trypsin that is expressed 2 days after emergence, coinciding with host seeking behavior of the female. This is Trypsin-6 (TRYP6) from Anopheles gambiae (African malaria mosquito).